The sequence spans 121 residues: Large ribosomal subunit protein bL19 (121 aa).

The protein belongs to the bacterial ribosomal protein bL19 family.

Functionally, this protein is located at the 30S-50S ribosomal subunit interface and may play a role in the structure and function of the aminoacyl-tRNA binding site. The sequence is that of Large ribosomal subunit protein bL19 from Mesomycoplasma hyopneumoniae (strain 232) (Mycoplasma hyopneumoniae).